The following is a 682-amino-acid chain: ATP-dependent zinc metalloprotease FtsH (682 aa).

Residues 1–7 (MKQSHKT) are Cytoplasmic-facing. A helical transmembrane segment spans residues 8-28 (ILLWALLIFLFVMIYNLISDG). Over 29 to 138 (TSGEETLDTT…YEVKAKEEST (110 aa)) the chain is Periplasmic. A helical transmembrane segment spans residues 139-159 (FWQSLLISWLPMLLLFALFFF). At 160-682 (FMRQLQAGGG…SGTDPEPEPA (523 aa)) the chain is on the cytoplasmic side. Residue 232–239 (GPPGTGKT) participates in ATP binding. Residue H454 coordinates Zn(2+). E455 is a catalytic residue. Zn(2+) is bound by residues H458 and D531. The disordered stretch occupies residues 638-682 (LSRPAVVSKPSADAESSVDEDEREARPALFPPLGKSGTDPEPEPA).

The protein in the central section; belongs to the AAA ATPase family. This sequence in the C-terminal section; belongs to the peptidase M41 family. As to quaternary structure, homohexamer. The cofactor is Zn(2+).

It is found in the cell inner membrane. In terms of biological role, acts as a processive, ATP-dependent zinc metallopeptidase for both cytoplasmic and membrane proteins. Plays a role in the quality control of integral membrane proteins. The chain is ATP-dependent zinc metalloprotease FtsH from Haliangium ochraceum (strain DSM 14365 / JCM 11303 / SMP-2).